Here is a 581-residue protein sequence, read N- to C-terminus: Pyridine nucleotide-disulfide oxidoreductase domain-containing protein 2 (581 aa).

38–71 (VVIGAGHNGLVAAAYLQRLGVNTAVFERRHVIGG) is a binding site for FAD.

This sequence belongs to the carotenoid/retinoid oxidoreductase family. As to quaternary structure, interacts with COX5B; this interaction may contribute to localize PYROXD2 to the inner face of the inner mitochondrial membrane.

It localises to the mitochondrion matrix. Its function is as follows. Probable oxidoreductase that may play a role as regulator of mitochondrial function. This is Pyridine nucleotide-disulfide oxidoreductase domain-containing protein 2 from Homo sapiens (Human).